Here is a 723-residue protein sequence, read N- to C-terminus: Tripartite motif-containing protein 42 (723 aa).

The RING-type zinc-finger motif lies at 146 to 192; that stretch reads CPMCNRLRLHSFMLPCNHSLCEKCLRQLQKHAEVTENFFILICPMCS. 2 consecutive B box-type zinc fingers follow at residues 235–280 and 285–326; these read PILC…FVDT and QDEK…TVSL. Cysteine 290, histidine 293, cysteine 313, and histidine 318 together coordinate Zn(2+). Residues 382–412 adopt a coiled-coil conformation; that stretch reads KLRAILQEKEKIIMEQIENLEVSRQKEIEKY. The 59-residue stretch at 434 to 492 folds into the COS domain; that stretch reads LKETGQVAFLQSAKILVDQIEEGIQNTFRPDPQLRLHSLHCIPLDFAELSNAIHELFPT. One can recognise a Fibronectin type-III domain in the interval 603-701; that stretch reads TPGPIVIYQT…DICKVVTPDG (99 aa).

The protein belongs to the TRIM/RBCC family.

The polypeptide is Tripartite motif-containing protein 42 (Trim42) (Mus musculus (Mouse)).